Reading from the N-terminus, the 96-residue chain is uncharacterized protein (96 aa).

The signal sequence occupies residues 1 to 30 (MLILSVFCAVFYAFLTAIVANFSLKTLAIG). The Extracellular segment spans residues 31 to 54 (ATFVKSHLKSNPIPYGDLVADSLD). A helical transmembrane segment spans residues 55–75 (FGNITPTVTLLFAILIAVLAL). At 76–96 (KCEFSCSTSAPAGQASGRKVK) the chain is on the cytoplasmic side.

It is found in the membrane. This is an uncharacterized protein from Dictyostelium discoideum (Social amoeba).